The chain runs to 513 residues: Sugar transport protein 7 (513 aa).

The Cytoplasmic portion of the chain corresponds to 1 to 26; that stretch reads MAGGSFGPTGVAKERAEQYQGKVTSY. The next 12 helical transmembrane spans lie at 27-47, 84-104, 121-141, 144-164, 171-191, 205-225, 286-306, 324-344, 351-371, 387-407, 427-447, and 452-472; these read VIIACLVAAIGGSIFGYDIGI, GLAAFTSSLYLAGLVSTLVAS, ISFLIGSGLNAGAVNLAMLLA, IMLGVGIGFGNQAVPLYLSEV, GGLNMMFQLATTIGIFTANMV, LSLGLAAFPALLMTLGGYFLP, LVMAICMPMFQILTGINSILF, YSSALTGAVLVLSTFISIGLV, ALLITGGIQMIICQVIVAVIL, VIVVIFICLFVVAFGWSWGPL, ITVAVNLLFTFIIAQAFLGLL, and FGIFLFFAGWVTVMTIFVYFL. Over 473–513 the chain is Cytoplasmic; that stretch reads LPETKGVPIEEMTLLWSKHWFWKKVLPDATNLEDESKNVSV.

It belongs to the major facilitator superfamily. Sugar transporter (TC 2.A.1.1) family.

Its subcellular location is the cell membrane. Mediates an active uptake of hexoses, probably by sugar/hydrogen symport. The sequence is that of Sugar transport protein 7 (STP7) from Arabidopsis thaliana (Mouse-ear cress).